The primary structure comprises 560 residues: 2-succinyl-5-enolpyruvyl-6-hydroxy-3-cyclohexene-1-carboxylate synthase (560 aa).

The protein belongs to the TPP enzyme family. MenD subfamily. Homodimer. Requires Mg(2+) as cofactor. Mn(2+) is required as a cofactor. It depends on thiamine diphosphate as a cofactor.

It carries out the reaction isochorismate + 2-oxoglutarate + H(+) = 5-enolpyruvoyl-6-hydroxy-2-succinyl-cyclohex-3-ene-1-carboxylate + CO2. It functions in the pathway quinol/quinone metabolism; 1,4-dihydroxy-2-naphthoate biosynthesis; 1,4-dihydroxy-2-naphthoate from chorismate: step 2/7. Its pathway is quinol/quinone metabolism; menaquinone biosynthesis. Its function is as follows. Catalyzes the thiamine diphosphate-dependent decarboxylation of 2-oxoglutarate and the subsequent addition of the resulting succinic semialdehyde-thiamine pyrophosphate anion to isochorismate to yield 2-succinyl-5-enolpyruvyl-6-hydroxy-3-cyclohexene-1-carboxylate (SEPHCHC). This is 2-succinyl-5-enolpyruvyl-6-hydroxy-3-cyclohexene-1-carboxylate synthase from Pectobacterium carotovorum subsp. carotovorum (strain PC1).